A 699-amino-acid polypeptide reads, in one-letter code: Elongation factor G (699 aa).

Residues 8-283 enclose the tr-type G domain; sequence EHIRNIGICA…AVVDFLPSPI (276 aa). GTP contacts are provided by residues 17–24, 81–85, and 135–138; these read AHIDAGKT, DTPGH, and NKMD.

It belongs to the TRAFAC class translation factor GTPase superfamily. Classic translation factor GTPase family. EF-G/EF-2 subfamily.

The protein localises to the cytoplasm. Functionally, catalyzes the GTP-dependent ribosomal translocation step during translation elongation. During this step, the ribosome changes from the pre-translocational (PRE) to the post-translocational (POST) state as the newly formed A-site-bound peptidyl-tRNA and P-site-bound deacylated tRNA move to the P and E sites, respectively. Catalyzes the coordinated movement of the two tRNA molecules, the mRNA and conformational changes in the ribosome. The chain is Elongation factor G from Rickettsia rickettsii.